The sequence spans 430 residues: Cytochrome P450 monooxygenase FGSG_15680 (430 aa).

Residue C351 coordinates heme.

Belongs to the cytochrome P450 family. Heme serves as cofactor.

The protein operates within mycotoxin biosynthesis. Cytochrome P450 monooxygenase; part of the gene cluster that mediates the biosynthesis of gramillins A and B, bicyclic lipopeptides that induce cell death in maize leaves but not in wheat leaves. The nonribosomal peptide synthetase GRA1 incorporates respectively a glutamic adic (Glu), a leucine (Leu), a serine (Ser), a hydroxyglutamine (HOGln), a 2-amino decanoic acid, and 2 cysteins (CysB and CysA). The biosynthesis of 2-amino decanoic acid incorporated in gramillins could be initiated by a fatty acid synthase composed of the alpha and beta subunits FGSG_00036 and FGSG_11656. The cytochrome P450 monooxygenase FGSG_15680 could hydroxylate the fatty acid chain. Subsequent oxidation to the ketone by the oxidoreductase FGSG_00048 and transamination by aminotransferase FGSG_00049 could form 2-amino-decanoic acid. On the other hand, FGSG_15680 could also be responsible for the HO-modified glutamine at the gamma-position. Whether hydroxylation occurs on the fully assembled product or on the Gln residue prior to assembly into the gramillins requires further proof. The thioredoxin FGSG_00043 could also be required for the disulfide-bond formation between CysA and CysB. The specific involvement of the remaining proteins from the cluster is more difficult to discern, but could have broader regulatory (FGSG_00040 and FGSG_11657) or enzymatic functions (FGSG_00044 and FGSG_00045). The final C-domain of GRA1 does not possess the expected sequence of a termination CT domain, often implicated in macrocyclization and release of a cyclopeptidein fungal NRPs; and the thioesterase FGSG_00047 may act in concert with the terminal C-domain of GRA1 to catalyze the formation of the macrocyclic anhydride and release of the products. The sequence is that of Cytochrome P450 monooxygenase FGSG_15680 from Gibberella zeae (strain ATCC MYA-4620 / CBS 123657 / FGSC 9075 / NRRL 31084 / PH-1) (Wheat head blight fungus).